Reading from the N-terminus, the 215-residue chain is Small ribosomal subunit protein uS5 (215 aa).

The tract at residues 1 to 62 (MTDSSPQSNP…QERDSEWQER (62 aa)) is disordered. Low complexity predominate over residues 9–28 (NPNAVPGAADVPAAAEGQQQ). The segment covering 29-61 (EQRRGGGRGERGDRRGGRRGDRRNQERDSEWQE) has biased composition (basic and acidic residues). In terms of domain architecture, S5 DRBM spans 59 to 122 (WQERVVQIRR…ADGKKHLVKV (64 aa)).

The protein belongs to the universal ribosomal protein uS5 family. As to quaternary structure, part of the 30S ribosomal subunit. Contacts proteins S4 and S8.

In terms of biological role, with S4 and S12 plays an important role in translational accuracy. Functionally, located at the back of the 30S subunit body where it stabilizes the conformation of the head with respect to the body. This is Small ribosomal subunit protein uS5 from Parasynechococcus marenigrum (strain WH8102).